The primary structure comprises 260 residues: 23S rRNA (guanosine-2'-O-)-methyltransferase RlmB (260 aa).

Residues glycine 197, isoleucine 217, and leucine 226 each coordinate S-adenosyl-L-methionine.

This sequence belongs to the class IV-like SAM-binding methyltransferase superfamily. RNA methyltransferase TrmH family. RlmB subfamily.

It localises to the cytoplasm. The enzyme catalyses guanosine(2251) in 23S rRNA + S-adenosyl-L-methionine = 2'-O-methylguanosine(2251) in 23S rRNA + S-adenosyl-L-homocysteine + H(+). In terms of biological role, specifically methylates the ribose of guanosine 2251 in 23S rRNA. This Nitrosomonas europaea (strain ATCC 19718 / CIP 103999 / KCTC 2705 / NBRC 14298) protein is 23S rRNA (guanosine-2'-O-)-methyltransferase RlmB.